Reading from the N-terminus, the 441-residue chain is MSNVTHQPKIGFVSLGCPKNLVDSERILTELRTEGYDVVPRYDDADMVIVNTCGFIDSAVQESLEAIGEALNENGKVIVTGCLGAKEDQIREVHPKVLEITGPHSYEQVLQHVHHYVPKPKHNPFLSLVPEQGVKLTPRHYAYLKISEGCNHRCTFCIIPSMRGDLVSRPIGDVLSEAKRLVDAGVKEILVISQDTSAYGVDVKHRTGFHNGEPVKTSMVSLCEQLSKLGVWTRLHYVYPYPHVDDVIPLMAEGKILPYLDIPLQHASPRILKLMKRPGSVDRQLARIKQWREICPELTLRSTFIVGFPGETEEDFQMLLDFLKEARLDRVGCFKYSPVEGAGANDLPAQVPEEVKEERWNRFMQLQQQISAERLQEKVGREILVIVDEVDEEGAIGRSMADAPEIDGAVYLNGETNVKPGDIVRVKVENADEYDLWGSRV.

An MTTase N-terminal domain is found at 8-118 (PKIGFVSLGC…VLQHVHHYVP (111 aa)). 6 residues coordinate [4Fe-4S] cluster: C17, C53, C82, C150, C154, and C157. Residues 136–373 (LTPRHYAYLK…MQLQQQISAE (238 aa)) form the Radical SAM core domain. The region spanning 376–441 (QEKVGREILV…DEYDLWGSRV (66 aa)) is the TRAM domain.

Belongs to the methylthiotransferase family. RimO subfamily. [4Fe-4S] cluster is required as a cofactor.

The protein resides in the cytoplasm. It catalyses the reaction L-aspartate(89)-[ribosomal protein uS12]-hydrogen + (sulfur carrier)-SH + AH2 + 2 S-adenosyl-L-methionine = 3-methylsulfanyl-L-aspartate(89)-[ribosomal protein uS12]-hydrogen + (sulfur carrier)-H + 5'-deoxyadenosine + L-methionine + A + S-adenosyl-L-homocysteine + 2 H(+). Catalyzes the methylthiolation of an aspartic acid residue of ribosomal protein uS12. The sequence is that of Ribosomal protein uS12 methylthiotransferase RimO from Salmonella heidelberg (strain SL476).